The chain runs to 285 residues: Ribosomal RNA small subunit methyltransferase A (285 aa).

Residues His-27, Leu-29, Gly-54, Glu-75, Asp-100, and Asn-120 each contribute to the S-adenosyl-L-methionine site.

The protein belongs to the class I-like SAM-binding methyltransferase superfamily. rRNA adenine N(6)-methyltransferase family. RsmA subfamily.

It is found in the cytoplasm. It catalyses the reaction adenosine(1518)/adenosine(1519) in 16S rRNA + 4 S-adenosyl-L-methionine = N(6)-dimethyladenosine(1518)/N(6)-dimethyladenosine(1519) in 16S rRNA + 4 S-adenosyl-L-homocysteine + 4 H(+). Its function is as follows. Specifically dimethylates two adjacent adenosines (A1518 and A1519) in the loop of a conserved hairpin near the 3'-end of 16S rRNA in the 30S particle. May play a critical role in biogenesis of 30S subunits. In Phenylobacterium zucineum (strain HLK1), this protein is Ribosomal RNA small subunit methyltransferase A.